The sequence spans 209 residues: Putative thymidylate synthase (209 aa).

Residue cysteine 137 is part of the active site.

Belongs to the thymidylate synthase family. Archaeal-type ThyA subfamily. In terms of assembly, monomer.

Its subcellular location is the cytoplasm. Its pathway is pyrimidine metabolism; dTTP biosynthesis. May catalyze the biosynthesis of dTMP using an unknown cosubstrate. This Methanopyrus kandleri (strain AV19 / DSM 6324 / JCM 9639 / NBRC 100938) protein is Putative thymidylate synthase.